Here is a 216-residue protein sequence, read N- to C-terminus: MLDREGFRPNVGIILLNAHNEVFWGKRLREHSWQFPQGGIKYGETPMQAMYRELHEETGLLPEHVKIIGRTRDWLRYEVPDKFIKREVRGHYRGQKQIWFLLRMVGRDCDICLRATDHPEFDAWRWNEYWVPLDAVIEFKRDVYQLALTELSRFLRRPAQRTDKSRGPRAPRYPRVSNGHAASETPAVIDASAVCSEVEPGASTLDEIPPRLILRD.

The Nudix hydrolase domain occupies 6 to 149 (GFRPNVGIIL…KRDVYQLALT (144 aa)). The Nudix box motif lies at 38-59 (GGIKYGETPMQAMYRELHEETG). The disordered stretch occupies residues 159–180 (AQRTDKSRGPRAPRYPRVSNGH).

The protein belongs to the Nudix hydrolase family. RppH subfamily. Requires a divalent metal cation as cofactor.

Accelerates the degradation of transcripts by removing pyrophosphate from the 5'-end of triphosphorylated RNA, leading to a more labile monophosphorylated state that can stimulate subsequent ribonuclease cleavage. The protein is RNA pyrophosphohydrolase of Burkholderia thailandensis (strain ATCC 700388 / DSM 13276 / CCUG 48851 / CIP 106301 / E264).